A 99-amino-acid polypeptide reads, in one-letter code: MPNTKSAKKRVRVSEKRRLRNKAYKTFFKNRIKEVIKAIENGEPKEVVLELARKAQAAIDKAVSKGVIHKNQGARRKERLFKRVNEYLKSLEAAETTQE.

It belongs to the bacterial ribosomal protein bS20 family.

In terms of biological role, binds directly to 16S ribosomal RNA. The sequence is that of Small ribosomal subunit protein bS20 from Thermotoga neapolitana (strain ATCC 49049 / DSM 4359 / NBRC 107923 / NS-E).